A 235-amino-acid polypeptide reads, in one-letter code: Pyridoxine 5'-phosphate synthase (235 aa).

3-amino-2-oxopropyl phosphate is bound at residue Asn6. 1-deoxy-D-xylulose 5-phosphate is bound at residue 8–9 (DH). Arg17 contributes to the 3-amino-2-oxopropyl phosphate binding site. His42 acts as the Proton acceptor in catalysis. Positions 44 and 49 each coordinate 1-deoxy-D-xylulose 5-phosphate. The Proton acceptor role is filled by Glu69. Thr99 provides a ligand contact to 1-deoxy-D-xylulose 5-phosphate. Residue His189 is the Proton donor of the active site. 3-amino-2-oxopropyl phosphate is bound by residues Gly190 and 211–212 (GH).

This sequence belongs to the PNP synthase family. In terms of assembly, homooctamer; tetramer of dimers.

It is found in the cytoplasm. The catalysed reaction is 3-amino-2-oxopropyl phosphate + 1-deoxy-D-xylulose 5-phosphate = pyridoxine 5'-phosphate + phosphate + 2 H2O + H(+). The protein operates within cofactor biosynthesis; pyridoxine 5'-phosphate biosynthesis; pyridoxine 5'-phosphate from D-erythrose 4-phosphate: step 5/5. Its function is as follows. Catalyzes the complicated ring closure reaction between the two acyclic compounds 1-deoxy-D-xylulose-5-phosphate (DXP) and 3-amino-2-oxopropyl phosphate (1-amino-acetone-3-phosphate or AAP) to form pyridoxine 5'-phosphate (PNP) and inorganic phosphate. The protein is Pyridoxine 5'-phosphate synthase of Chlorobium luteolum (strain DSM 273 / BCRC 81028 / 2530) (Pelodictyon luteolum).